Reading from the N-terminus, the 3587-residue chain is Tyrocidine synthase 2 (3587 aa).

The interval 466-1045 is domain 1 (Proline-activating); that stretch reads AATMHELFSR…IQALAAYVEG (580 aa). 2 consecutive Carrier domains span residues 972 to 1047 and 2007 to 2082; these read APTT…EGGE and APAT…EHSE. An O-(pantetheine 4'-phosphoryl)serine mark is found at Ser-1007 and Ser-2042. The domain 2 (Phenylalanine-activating) stretch occupies residues 1522 to 2081; the sequence is EQTAVVFGDK…RDLARLIEHS (560 aa). A domain 3 (D-phenylalanine-activating) region spans residues 2540–3122; it reads YRADQTIQQL…NSRESEQGVV (583 aa). The disordered stretch occupies residues 3017 to 3040; it reads NDKIDRKALPKPNQEENRTEQYAA. A compositionally biased stretch (basic and acidic residues) spans 3018–3035; that stretch reads DKIDRKALPKPNQEENRT. In terms of domain architecture, Carrier 3 spans 3040-3114; that stretch reads APQTELEQLL…EAALRVIPNS (75 aa). O-(pantetheine 4'-phosphoryl)serine is present on Ser-3075.

The protein belongs to the ATP-dependent AMP-binding enzyme family. In terms of assembly, large multienzyme complex of TycA, TycB and TycC. It depends on pantetheine 4'-phosphate as a cofactor.

The catalysed reaction is L-phenylalanine + ATP + H2O = D-phenylalanine + AMP + diphosphate + H(+). Its pathway is antibiotic biosynthesis; tyrocidine biosynthesis. Functionally, activates the second to fourth amino acids in tyrocidine (in tyrocidine A, Pro, Phe, and D-Phe) and epimerizes the last one. This Brevibacillus parabrevis protein is Tyrocidine synthase 2 (tycB).